A 165-amino-acid chain; its full sequence is Phosphopantetheine adenylyltransferase (165 aa).

Ser-10 contacts substrate. Residues Ser-10–Phe-11 and His-18 each bind ATP. 3 residues coordinate substrate: Lys-42, Leu-74, and Arg-88. ATP is bound by residues Gly-89–Arg-91, Glu-99, and Tyr-124–Ser-130.

It belongs to the bacterial CoaD family. In terms of assembly, homohexamer. Requires Mg(2+) as cofactor.

It is found in the cytoplasm. It catalyses the reaction (R)-4'-phosphopantetheine + ATP + H(+) = 3'-dephospho-CoA + diphosphate. Its pathway is cofactor biosynthesis; coenzyme A biosynthesis; CoA from (R)-pantothenate: step 4/5. Its function is as follows. Reversibly transfers an adenylyl group from ATP to 4'-phosphopantetheine, yielding dephospho-CoA (dPCoA) and pyrophosphate. This is Phosphopantetheine adenylyltransferase from Halalkalibacterium halodurans (strain ATCC BAA-125 / DSM 18197 / FERM 7344 / JCM 9153 / C-125) (Bacillus halodurans).